The following is a 596-amino-acid chain: Transcription factor COE3 (596 aa).

Residues 1–22 (MFGIQENIPRGGTTMKEEPLGS) are disordered. Positions 63–66 (RKSN) are interaction with DNA. The segment at 151-170 (CRVLLTHEIMCSRCCDKKSC) adopts a C5-type zinc-finger fold. Interaction with DNA regions lie at residues 197-204 (NCLKNAGN) and 236-239 (NNSK). The IPT/TIG domain maps to 263 to 346 (PCIKAISPSE…KGAPGRFVYT (84 aa)). The interval 451–483 (TSQANDQVGYSRNTSSVSPRGYVPSSTPQQSNY) is disordered.

Belongs to the COE family. In terms of assembly, forms either a homodimer or a heterodimer with a related family member. In terms of tissue distribution, expressed in brain.

Its subcellular location is the nucleus. Transcriptional activator. Recognizes variations of the palindromic sequence 5'-ATTCCCNNGGGAATT-3'. In Homo sapiens (Human), this protein is Transcription factor COE3 (EBF3).